Consider the following 369-residue polypeptide: Glutamate 5-kinase (369 aa).

Lys8 is an ATP binding site. Substrate-binding residues include Ser49, Asp136, and Asn148. ATP is bound by residues 168 to 169 and 212 to 218; these read TD and TGGMMTK. The PUA domain maps to 277–355; the sequence is TGKLYLDSGA…KEISTILGYV (79 aa).

This sequence belongs to the glutamate 5-kinase family.

It is found in the cytoplasm. The enzyme catalyses L-glutamate + ATP = L-glutamyl 5-phosphate + ADP. Its pathway is amino-acid biosynthesis; L-proline biosynthesis; L-glutamate 5-semialdehyde from L-glutamate: step 1/2. In terms of biological role, catalyzes the transfer of a phosphate group to glutamate to form L-glutamate 5-phosphate. This chain is Glutamate 5-kinase, found in Trichormus variabilis (strain ATCC 29413 / PCC 7937) (Anabaena variabilis).